A 293-amino-acid polypeptide reads, in one-letter code: Biphenyl-2,3-diol 1,2-dioxygenase (293 aa).

2 VOC domains span residues 5–119 and 143–265; these read RLGY…IYYG and GIGH…FGWG. H146, H210, and E261 together coordinate Fe cation.

It belongs to the extradiol ring-cleavage dioxygenase family. As to quaternary structure, homooctamer. Fe(2+) is required as a cofactor.

The enzyme catalyses biphenyl-2,3-diol + O2 = 2-hydroxy-6-oxo-6-phenylhexa-2,4-dienoate + H(+). It functions in the pathway xenobiotic degradation; biphenyl degradation; 2-hydroxy-2,4-pentadienoate and benzoate from biphenyl: step 3/4. The sequence is that of Biphenyl-2,3-diol 1,2-dioxygenase (bphC) from Pseudomonas sp. (strain KKS102).